Consider the following 221-residue polypeptide: Keratin-associated protein 10-3 (221 aa).

18 consecutive repeat copies span residues 26–30 (CCEPP), 31–35 (CCATS), 36–40 (CCAPA), 57–61 (CCQAA), 79–83 (CCQQS), 89–93 (CCTSS), 99–103 (CCVPV), 104–108 (CCKPV), 109–113 (CCVPV), 114–118 (CCKPV), 119–123 (CCKPI), 124–128 (CCVPV), 136–140 (CCQQS), 146–150 (CCTTS), 151–155 (CCRPS), 177–181 (CCAPA), 188–192 (CCRPA), and 210–214 (CCGLS). Residues 26–214 (CCEPPCCATS…RLSSACCGLS (189 aa)) form an 18 X 5 AA repeats of C-C-X(3) region.

It belongs to the KRTAP type 10 family. In terms of assembly, interacts with hair keratins. As to expression, restricted to a narrow region of the hair fiber cuticle, lying approximately 20 cell layers above the apex of the dermal papilla of the hair root; not detected in any other tissues.

Its function is as follows. In the hair cortex, hair keratin intermediate filaments are embedded in an interfilamentous matrix, consisting of hair keratin-associated proteins (KRTAP), which are essential for the formation of a rigid and resistant hair shaft through their extensive disulfide bond cross-linking with abundant cysteine residues of hair keratins. The matrix proteins include the high-sulfur and high-glycine-tyrosine keratins. This is Keratin-associated protein 10-3 (KRTAP10-3) from Homo sapiens (Human).